Here is a 172-residue protein sequence, read N- to C-terminus: Putative RNA polymerase II transcriptional coactivator (172 aa).

Disordered stretches follow at residues 1-43 (MPPK…QDGN) and 123-172 (QTDA…DDDE). Over residues 24–43 (GNTGKAQPQELTKGSDQDGN) the composition is skewed to polar residues. Basic and acidic residues predominate over residues 131-144 (PKVKALESNKESIK). Residues 158-172 (TSDEEEAAEDEDDDE) show a composition bias toward acidic residues.

Belongs to the transcriptional coactivator PC4 family.

Its subcellular location is the nucleus. Functionally, general coactivator that functions cooperatively with TAFs and mediates functional interactions between upstream activators and the general transcriptional machinery. Binds single-stranded DNA. The polypeptide is Putative RNA polymerase II transcriptional coactivator (Neurospora crassa (strain ATCC 24698 / 74-OR23-1A / CBS 708.71 / DSM 1257 / FGSC 987)).